The following is a 362-amino-acid chain: Outer membrane porin F (362 aa).

An N-terminal signal peptide occupies residues 1–22; the sequence is MMKRNILAVIVPALLVAGTANA.

Belongs to the Gram-negative porin family. Homotrimer. Forms mixed heterotrimers with OmpC; other mixed heterotrimers are also probable.

The protein resides in the cell outer membrane. In terms of biological role, forms pores that allow passive diffusion of small molecules across the outer membrane. Its function is as follows. (Microbial infection) Is the major receptor for colicin E5. Functionally, (Microbial infection) A mixed OmpC-OmpF heterotrimer is the outer membrane receptor for toxin CdiA-EC536. The sequence is that of Outer membrane porin F (ompF) from Escherichia coli O6:K15:H31 (strain 536 / UPEC).